The sequence spans 382 residues: ATP phosphoribosyltransferase regulatory subunit (382 aa).

It belongs to the class-II aminoacyl-tRNA synthetase family. HisZ subfamily. As to quaternary structure, heteromultimer composed of HisG and HisZ subunits.

It localises to the cytoplasm. It functions in the pathway amino-acid biosynthesis; L-histidine biosynthesis; L-histidine from 5-phospho-alpha-D-ribose 1-diphosphate: step 1/9. Required for the first step of histidine biosynthesis. May allow the feedback regulation of ATP phosphoribosyltransferase activity by histidine. This Acidovorax sp. (strain JS42) protein is ATP phosphoribosyltransferase regulatory subunit.